The following is a 54-amino-acid chain: Large ribosomal subunit protein bL33A (54 aa).

It belongs to the bacterial ribosomal protein bL33 family.

In Saccharopolyspora erythraea (strain ATCC 11635 / DSM 40517 / JCM 4748 / NBRC 13426 / NCIMB 8594 / NRRL 2338), this protein is Large ribosomal subunit protein bL33A.